We begin with the raw amino-acid sequence, 191 residues long: 3-isopropylmalate dehydratase small subunit (191 aa).

It belongs to the LeuD family. LeuD type 1 subfamily. In terms of assembly, heterodimer of LeuC and LeuD.

The enzyme catalyses (2R,3S)-3-isopropylmalate = (2S)-2-isopropylmalate. The protein operates within amino-acid biosynthesis; L-leucine biosynthesis; L-leucine from 3-methyl-2-oxobutanoate: step 2/4. In terms of biological role, catalyzes the isomerization between 2-isopropylmalate and 3-isopropylmalate, via the formation of 2-isopropylmaleate. The sequence is that of 3-isopropylmalate dehydratase small subunit from Anaeromyxobacter sp. (strain K).